Consider the following 344-residue polypeptide: Fructose-1,6-bisphosphatase class 1 (344 aa).

The Mg(2+) site is built by glutamate 92, aspartate 115, leucine 117, and aspartate 118. Residues 118 to 121, asparagine 211, tyrosine 244, and lysine 274 each bind substrate; that span reads DGSS. Position 280 (glutamate 280) interacts with Mg(2+).

This sequence belongs to the FBPase class 1 family. As to quaternary structure, homotetramer. It depends on Mg(2+) as a cofactor.

The protein localises to the cytoplasm. It catalyses the reaction beta-D-fructose 1,6-bisphosphate + H2O = beta-D-fructose 6-phosphate + phosphate. The protein operates within carbohydrate biosynthesis; gluconeogenesis. This Aeromonas hydrophila subsp. hydrophila (strain ATCC 7966 / DSM 30187 / BCRC 13018 / CCUG 14551 / JCM 1027 / KCTC 2358 / NCIMB 9240 / NCTC 8049) protein is Fructose-1,6-bisphosphatase class 1.